The chain runs to 241 residues: Glutathione S-transferase theta-3 (241 aa).

The region spanning 2-82 (GLELYLDLMS…YLSRKYKAPD (81 aa)) is the GST N-terminal domain. Glutathione-binding positions include 53–54 (KV) and 66–67 (ES). The 135-residue stretch at 88–222 (DLQTRARVDE…VVLKAKDMPP (135 aa)) folds into the GST C-terminal domain.

The protein belongs to the GST superfamily. Theta family. Homodimer. As to expression, expressed strongly in liver, and at lower levels in kidney and testis.

Its subcellular location is the cytoplasm. It carries out the reaction RX + glutathione = an S-substituted glutathione + a halide anion + H(+). Functionally, conjugation of reduced glutathione to a wide number of exogenous and endogenous hydrophobic electrophiles. Shows high activity towards 4-nitrobenzyl chloride (4-NBC). Also has lower activity towards 1,2-epoxy-3-(p-nitrophenoxy)propane (EPNP), cumene hydroperoxide, 1-chloro-2,4-dinitrobenzene (CDNB), 7-chloro-4-nitrobenzo-2-oxa-1,3-diazole (NBD-Cl), and ethacrynic acid. The polypeptide is Glutathione S-transferase theta-3 (Mus musculus (Mouse)).